Consider the following 328-residue polypeptide: 3-dehydroquinate synthase (328 aa).

Belongs to the archaeal-type DHQ synthase family.

It catalyses the reaction 2-amino-2,3,7-trideoxy-D-lyxo-hept-6-ulosonate + NAD(+) + H2O = 3-dehydroquinate + NH4(+) + NADH + H(+). Functionally, catalyzes the oxidative deamination and cyclization of 2-amino-3,7-dideoxy-D-threo-hept-6-ulosonic acid (ADH) to yield 3-dehydroquinate (DHQ), which is fed into the canonical shikimic pathway of aromatic amino acid biosynthesis. The polypeptide is 3-dehydroquinate synthase (Methanospirillum hungatei JF-1 (strain ATCC 27890 / DSM 864 / NBRC 100397 / JF-1)).